The chain runs to 154 residues: PTTG1IP family member 2 (154 aa).

The first 26 residues, 1-26 (MCWLRAWGQILLPVFLSLFLIQLLIS), serve as a signal peptide directing secretion. Residues 27 to 97 (FSENGFIHSP…SIYWLNCKVD (71 aa)) lie on the Extracellular side of the membrane. A helical membrane pass occupies residues 98–118 (MFGIMMLLLIAVLITGFVWYC). The Cytoplasmic segment spans residues 119 to 154 (CAYHFYLQDLNRNRVYFYGRRETVPIHDRSATVYDE).

The protein localises to the membrane. In Homo sapiens (Human), this protein is PTTG1IP family member 2.